A 363-amino-acid chain; its full sequence is Homeobox protein Hox-A2a (363 aa).

4 disordered regions span residues 30–88 (DSFQ…LPPE), 98–117 (SKRN…GPVC), 189–220 (RMKH…SDEE), and 268–308 (DKNL…LDVS). The span at 31–44 (SFQSSSIKSSTLSR) shows a compositional bias: polar residues. The Antp-type hexapeptide motif lies at 88–93 (EYPWMR). Residues 103–113 (LPNSTTTTISN) are compositionally biased toward polar residues. The segment at residues 137–196 (SRRLRTAYTNTQLLELEKEFHFNKYLCRPRRVEIAALLDLTERQVKVWFQNRRMKHKRQT) is a DNA-binding region (homeobox).

It belongs to the Antp homeobox family. Proboscipedia subfamily.

The protein localises to the nucleus. In terms of biological role, sequence-specific transcription factor which is part of a developmental regulatory system that provides cells with specific positional identities on the anterior-posterior axis. The chain is Homeobox protein Hox-A2a (hoxa2a) from Takifugu rubripes (Japanese pufferfish).